The following is an 866-amino-acid chain: Leucine--tRNA ligase (866 aa).

The 'HIGH' region signature appears at 42–52 (PYPSGKLHMGH). A 'KMSKS' region motif is present at residues 630–634 (KMSKS). ATP is bound at residue Lys-633.

The protein belongs to the class-I aminoacyl-tRNA synthetase family.

It is found in the cytoplasm. The enzyme catalyses tRNA(Leu) + L-leucine + ATP = L-leucyl-tRNA(Leu) + AMP + diphosphate. This chain is Leucine--tRNA ligase, found in Laribacter hongkongensis (strain HLHK9).